A 135-amino-acid polypeptide reads, in one-letter code: Aspartate 1-decarboxylase (135 aa).

The active-site Schiff-base intermediate with substrate; via pyruvic acid is Ser25. A Pyruvic acid (Ser) modification is found at Ser25. Thr57 contacts substrate. Residue Tyr58 is the Proton donor of the active site. 73 to 75 (GAA) provides a ligand contact to substrate.

The protein belongs to the PanD family. In terms of assembly, heterooctamer of four alpha and four beta subunits. Requires pyruvate as cofactor. Is synthesized initially as an inactive proenzyme, which is activated by self-cleavage at a specific serine bond to produce a beta-subunit with a hydroxyl group at its C-terminus and an alpha-subunit with a pyruvoyl group at its N-terminus.

The protein localises to the cytoplasm. The enzyme catalyses L-aspartate + H(+) = beta-alanine + CO2. Its pathway is cofactor biosynthesis; (R)-pantothenate biosynthesis; beta-alanine from L-aspartate: step 1/1. Its function is as follows. Catalyzes the pyruvoyl-dependent decarboxylation of aspartate to produce beta-alanine. This is Aspartate 1-decarboxylase from Mycobacterium sp. (strain JLS).